A 214-amino-acid chain; its full sequence is Adenylate kinase (214 aa).

Residue 10-15 (GAGKGT) coordinates ATP. The interval 30-59 (STGDMLRAAVKAGTPLGLEAKKVMDAGQLV) is NMP. Residues Thr31, Arg36, 57 to 59 (QLV), 85 to 88 (GFPR), and Gln92 contribute to the AMP site. Residues 122 to 159 (GRRVHSGSGRVYHVVFNPPKVEGKDDVTGEDLSIRPDD) are LID. ATP-binding positions include Arg123 and 132-133 (VY). Arg156 and Arg167 together coordinate AMP. Gln200 contributes to the ATP binding site.

This sequence belongs to the adenylate kinase family. Monomer.

Its subcellular location is the cytoplasm. It carries out the reaction AMP + ATP = 2 ADP. The protein operates within purine metabolism; AMP biosynthesis via salvage pathway; AMP from ADP: step 1/1. Functionally, catalyzes the reversible transfer of the terminal phosphate group between ATP and AMP. Plays an important role in cellular energy homeostasis and in adenine nucleotide metabolism. The polypeptide is Adenylate kinase (Shewanella denitrificans (strain OS217 / ATCC BAA-1090 / DSM 15013)).